A 72-amino-acid chain; its full sequence is UPF0154 protein BH2350 (72 aa).

A helical membrane pass occupies residues 3–23 (WMILLWITLGIVIGIAIGFFI).

This sequence belongs to the UPF0154 family.

The protein localises to the membrane. This chain is UPF0154 protein BH2350, found in Halalkalibacterium halodurans (strain ATCC BAA-125 / DSM 18197 / FERM 7344 / JCM 9153 / C-125) (Bacillus halodurans).